We begin with the raw amino-acid sequence, 156 residues long: Small ribosomal subunit protein uS7 (156 aa).

It belongs to the universal ribosomal protein uS7 family. As to quaternary structure, part of the 30S ribosomal subunit. Contacts proteins S9 and S11.

Its function is as follows. One of the primary rRNA binding proteins, it binds directly to 16S rRNA where it nucleates assembly of the head domain of the 30S subunit. Is located at the subunit interface close to the decoding center, probably blocks exit of the E-site tRNA. The sequence is that of Small ribosomal subunit protein uS7 from Phytoplasma australiense.